The sequence spans 74 residues: Putative defensin-like protein 12 (74 aa).

A signal peptide spans 1 to 26 (MAKPCAAFLVFLCLSMLILSIPDISC). Intrachain disulfides connect Cys-26–Cys-50, Cys-33–Cys-59, and Cys-39–Cys-61.

Belongs to the DEFL family.

It localises to the secreted. This chain is Putative defensin-like protein 12, found in Arabidopsis thaliana (Mouse-ear cress).